The chain runs to 290 residues: Carbonic anhydrase-related protein (290 aa).

The interval 1-26 (MADLSFIEDTVAFPEKEEDEEEEEEG) is disordered. Residue S5 is modified to Phosphoserine. The segment covering 16 to 26 (KEEDEEEEEEG) has biased composition (acidic residues). Residues 27–289 (VEWGYEEGVE…LSDRVIRAAF (263 aa)) form the Alpha-carbonic anhydrase domain. H87 serves as the catalytic Proton donor/acceptor. 2 residues coordinate Zn(2+): H118 and H141.

This sequence belongs to the alpha-carbonic anhydrase family.

In terms of biological role, does not have a carbonic anhydrase catalytic activity. The protein is Carbonic anhydrase-related protein (CA8) of Homo sapiens (Human).